Consider the following 128-residue polypeptide: MALSKEEILQAIEEMKVIELHELVEAIKEKFNVTAAMPVAAVAAAPAGGAAAPAEEEKNEFDIILTGFDAAQKIALIKEVRAVSGLGLKEAKDAVEKGGETIKSGVSKEEAAAIKKQLEAAGGKVEVK.

It belongs to the bacterial ribosomal protein bL12 family. As to quaternary structure, homodimer. Part of the ribosomal stalk of the 50S ribosomal subunit. Forms a multimeric L10(L12)X complex, where L10 forms an elongated spine to which 2 to 4 L12 dimers bind in a sequential fashion. Binds GTP-bound translation factors.

Functionally, forms part of the ribosomal stalk which helps the ribosome interact with GTP-bound translation factors. Is thus essential for accurate translation. The protein is Large ribosomal subunit protein bL12 of Brachyspira hyodysenteriae (strain ATCC 49526 / WA1).